Reading from the N-terminus, the 587-residue chain is 2-succinyl-5-enolpyruvyl-6-hydroxy-3-cyclohexene-1-carboxylate synthase (587 aa).

The protein belongs to the TPP enzyme family. MenD subfamily. Homodimer. Mg(2+) serves as cofactor. It depends on Mn(2+) as a cofactor. Requires thiamine diphosphate as cofactor.

It carries out the reaction isochorismate + 2-oxoglutarate + H(+) = 5-enolpyruvoyl-6-hydroxy-2-succinyl-cyclohex-3-ene-1-carboxylate + CO2. It participates in quinol/quinone metabolism; 1,4-dihydroxy-2-naphthoate biosynthesis; 1,4-dihydroxy-2-naphthoate from chorismate: step 2/7. It functions in the pathway cofactor biosynthesis; phylloquinone biosynthesis. Functionally, catalyzes the thiamine diphosphate-dependent decarboxylation of 2-oxoglutarate and the subsequent addition of the resulting succinic semialdehyde-thiamine pyrophosphate anion to isochorismate to yield 2-succinyl-5-enolpyruvyl-6-hydroxy-3-cyclohexene-1-carboxylate (SEPHCHC). The chain is 2-succinyl-5-enolpyruvyl-6-hydroxy-3-cyclohexene-1-carboxylate synthase from Prochlorococcus marinus (strain AS9601).